The chain runs to 354 residues: WASH complex subunit 3 (354 aa).

A disordered region spans residues 76–354 (SSANVPVHNT…DDDDDDDESW (279 aa)). Pro residues predominate over residues 107–143 (IPPPPPPPPPPMTGVPPPPPPPPPPPISKSNIPPPPA). Positions 150–159 (ESDDDDEDNN) are enriched in acidic residues. Positions 213–244 (PQPPQPQPQSPSPQPPPPPTTTSSIPVPPPPF) are enriched in pro residues. Acidic residues predominate over residues 251 to 260 (SDDDDDDDEG). Positions 277-290 (NNNSNSNSYSNNNN) are enriched in low complexity. Acidic residues-rich tracts occupy residues 293 to 307 (DDDD…DDDN) and 342 to 354 (DADD…DESW).

This sequence belongs to the CCDC53 family. Probable component of the WASH complex.

The chain is WASH complex subunit 3 from Dictyostelium discoideum (Social amoeba).